Reading from the N-terminus, the 245-residue chain is 23S rRNA (guanosine-2'-O-)-methyltransferase RlmB (245 aa).

Positions 197, 217, and 226 each coordinate S-adenosyl-L-methionine.

Belongs to the class IV-like SAM-binding methyltransferase superfamily. RNA methyltransferase TrmH family. RlmB subfamily.

It localises to the cytoplasm. The enzyme catalyses guanosine(2251) in 23S rRNA + S-adenosyl-L-methionine = 2'-O-methylguanosine(2251) in 23S rRNA + S-adenosyl-L-homocysteine + H(+). Functionally, specifically methylates the ribose of guanosine 2251 in 23S rRNA. This chain is 23S rRNA (guanosine-2'-O-)-methyltransferase RlmB, found in Bordetella parapertussis (strain 12822 / ATCC BAA-587 / NCTC 13253).